Here is a 411-residue protein sequence, read N- to C-terminus: Mitotic apparatus protein p62 (411 aa).

Composition is skewed to acidic residues over residues 134 to 156 (AYEVGDEDLEDEDEGEEDEEEEE), 183 to 201 (ELDEDEDDDEEEEEEEEEI), and 246 to 321 (DDDE…EEDS). The segment at 134 to 378 (AYEVGDEDLE…KSPSKPKKEE (245 aa)) is disordered. A compositionally biased stretch (basic and acidic residues) spans 351-367 (GMKEKKTYSLEDMKQDL).

The protein belongs to the nucleoplasmin family. Post-translationally, phosphorylated by CaM-kinase II in vitro.

Its subcellular location is the nucleus. Functionally, required for mitotic progression. Binds to chromatin. The sequence is that of Mitotic apparatus protein p62 from Lytechinus pictus (Painted sea urchin).